We begin with the raw amino-acid sequence, 315 residues long: tRNA pseudouridine synthase B (315 aa).

The Nucleophile role is filled by D54.

This sequence belongs to the pseudouridine synthase TruB family. Type 1 subfamily.

It catalyses the reaction uridine(55) in tRNA = pseudouridine(55) in tRNA. Functionally, responsible for synthesis of pseudouridine from uracil-55 in the psi GC loop of transfer RNAs. The sequence is that of tRNA pseudouridine synthase B from Agrobacterium fabrum (strain C58 / ATCC 33970) (Agrobacterium tumefaciens (strain C58)).